The following is a 197-amino-acid chain: Protocatechuate 3,4-dioxygenase alpha chain (197 aa).

Arg130 contributes to the 3,4-dihydroxybenzoate binding site.

Belongs to the intradiol ring-cleavage dioxygenase family. In terms of assembly, the enzyme is an oligomer of 12 copies of the alpha and beta chains. Requires Fe(3+) as cofactor.

The catalysed reaction is 3,4-dihydroxybenzoate + O2 = 3-carboxy-cis,cis-muconate + 2 H(+). Its pathway is aromatic compound metabolism; beta-ketoadipate pathway; 3-carboxy-cis,cis-muconate from 3,4-dihydroxybenzoate: step 1/1. Functionally, plays an essential role in the utilization of numerous aromatic and hydroaromatic compounds via the beta-ketoadipate pathway. The protein is Protocatechuate 3,4-dioxygenase alpha chain (pcaG) of Burkholderia cepacia (Pseudomonas cepacia).